The sequence spans 1075 residues: Nuclear factor of activated T-cells, cytoplasmic 3 (1075 aa).

Residue Thr2 is modified to N-acetylthreonine. Positions 18 to 37 (FGEDGAPAPPPPGSRPADLE) are disordered. Residues 109 to 114 (PSIQIT) are calcineurin-binding. The segment at 205–306 (LGSPLTSPGG…PGHSPRGSVT (102 aa)) is disordered. Tandem repeats lie at residues 207–223 (SPLT…PGEE) and 236–252 (SPRQ…VTDE). A 3 X SP repeats region spans residues 207-308 (SPLTSPGGSP…HSPRGSVTED (102 aa)). Polar residues predominate over residues 236 to 253 (SPRQSPCHSPRSSVTDEN). Low complexity predominate over residues 256-270 (SPRPASGPSSRPTSP). The short motif at 273–275 (KRR) is the Nuclear localization signal element. Copy 3 of the repeat occupies 292–308 (SPVPSPGHSPRGSVTED). 2 positions are modified to phosphoserine: Ser344 and Ser372. In terms of domain architecture, RHD spans 415–596 (SSLPPLDWPL…IPVECSQRSA (182 aa)). A DNA-binding region spans residues 444-451 (RAHYETEG). A Nuclear localization signal motif is present at residues 686-688 (KRK). 2 disordered regions span residues 711–739 (DLSS…SHDS) and 887–988 (SNTG…GLSA). 2 stretches are compositionally biased toward polar residues: residues 724–739 (AQTQ…SHDS) and 887–912 (SNTG…QLQP). Low complexity-rich tracts occupy residues 916–939 (GPSH…SSPL) and 949–967 (PMPY…SPAT). The segment covering 970–981 (HSGQHSTQAQST) has biased composition (polar residues). A Nuclear export signal motif is present at residues 1032 to 1041 (TLDDVNEIIG). The disordered stretch occupies residues 1049–1075 (VSQGAGVSRQAPLPSPESLDLGRSDGL). Phosphoserine occurs at positions 1063 and 1066.

As to quaternary structure, NFATC proteins bind to DNA as monomers. Member of the multicomponent NFATC transcription complex that consists of at least two components, a pre-existing cytoplasmic component NFATC2 and an inducible nuclear component NFATC1. Other members such as NFATC4, or members of the activating protein-1 family, MAF, GATA4 and Cbp/p300 can also bind the complex. Component of a promoter-binding complex composed of STAT3, NFATC3 and NFATC4; complex formation is enhanced by calcineurin. Interacts with TRIM17; this interaction prevents NFATC3 nuclear localization. Interacts with and ubiquitinated by STUB1/CHIP; HSPA1A/HSP70 is required as a co-chaperone. Ubiquitinated by STUB1/CHIP, leading to proteasomal degradation. In terms of processing, phosphorylated by NFATC-kinase; dephosphorylated by calcineurin. Predominantly expressed in thymus and is also found in peripheral blood leukocytes and kidney. As to expression, predominantly expressed in skeletal muscle. Also found weakly expressed in the thymus, kidney, testis, spleen, prostate, ovary, small intestine, heart, placenta and pancreas. In terms of tissue distribution, expressed in thymus and kidney. Expressed in thymus and skeletal muscle.

The protein localises to the cytoplasm. Its subcellular location is the nucleus. Acts as a regulator of transcriptional activation. Binds to the TNFSF11/RANKL promoter region and promotes TNFSF11 transcription. Binding to the TNFSF11 promoter region is increased by high levels of Ca(2+) which induce NFATC3 expression and may lead to regulation of TNFSF11 expression in osteoblasts. Plays a role in promoting mesenteric arterial wall remodeling in response to the intermittent hypoxia-induced increase in EDN1 and ROCK signaling. As a result NFATC3 colocalizes with F-actin filaments, translocates to the nucleus and promotes transcription of the smooth muscle hypertrophy and differentiation marker ACTA2. Promotes lipopolysaccharide-induced apoptosis and hypertrophy in cardiomyocytes. Following JAK/STAT signaling activation and as part of a complex with NFATC4 and STAT3, binds to the alpha-beta E4 promoter region of CRYAB and activates transcription in cardiomyocytes. In conjunction with NFATC4, involved in embryonic heart development via maintenance of cardiomyocyte survival, proliferation and differentiation. Plays a role in the inducible expression of cytokine genes in T-cells, especially in the induction of the IL-2. Required for thymocyte maturation during DN3 to DN4 transition and during positive selection. Positively regulates macrophage-derived polymicrobial clearance, via binding to the promoter region and promoting transcription of NOS2 resulting in subsequent generation of nitric oxide. Involved in Ca(2+)-mediated transcriptional responses upon Ca(2+) influx via ORAI1 CRAC channels. The protein is Nuclear factor of activated T-cells, cytoplasmic 3 of Homo sapiens (Human).